The sequence spans 637 residues: 1,4-alpha-glucan branching enzyme GlgB (637 aa).

Aspartate 307 serves as the catalytic Nucleophile. Glutamate 361 serves as the catalytic Proton donor.

Belongs to the glycosyl hydrolase 13 family. GlgB subfamily. Monomer.

It catalyses the reaction Transfers a segment of a (1-&gt;4)-alpha-D-glucan chain to a primary hydroxy group in a similar glucan chain.. Its pathway is glycan biosynthesis; glycogen biosynthesis. Its function is as follows. Catalyzes the formation of the alpha-1,6-glucosidic linkages in glycogen by scission of a 1,4-alpha-linked oligosaccharide from growing alpha-1,4-glucan chains and the subsequent attachment of the oligosaccharide to the alpha-1,6 position. The chain is 1,4-alpha-glucan branching enzyme GlgB from Oceanobacillus iheyensis (strain DSM 14371 / CIP 107618 / JCM 11309 / KCTC 3954 / HTE831).